The sequence spans 61 residues: Large ribosomal subunit protein uL30 (61 aa).

The protein belongs to the universal ribosomal protein uL30 family. Part of the 50S ribosomal subunit.

The sequence is that of Large ribosomal subunit protein uL30 from Bifidobacterium longum (strain DJO10A).